Reading from the N-terminus, the 356-residue chain is tRNA N6-adenosine threonylcarbamoyltransferase (356 aa).

Positions 115 and 119 each coordinate Fe cation. Substrate contacts are provided by residues 138–142 (LVSGG), Asp171, Gly184, and Asn283. Position 311 (Asp311) interacts with Fe cation.

Belongs to the KAE1 / TsaD family. Fe(2+) serves as cofactor.

It localises to the cytoplasm. The enzyme catalyses L-threonylcarbamoyladenylate + adenosine(37) in tRNA = N(6)-L-threonylcarbamoyladenosine(37) in tRNA + AMP + H(+). Its function is as follows. Required for the formation of a threonylcarbamoyl group on adenosine at position 37 (t(6)A37) in tRNAs that read codons beginning with adenine. Is involved in the transfer of the threonylcarbamoyl moiety of threonylcarbamoyl-AMP (TC-AMP) to the N6 group of A37, together with TsaE and TsaB. TsaD likely plays a direct catalytic role in this reaction. The polypeptide is tRNA N6-adenosine threonylcarbamoyltransferase (Prochlorococcus marinus (strain SARG / CCMP1375 / SS120)).